An 883-amino-acid chain; its full sequence is Phosphoenolpyruvate carboxylase (883 aa).

Active-site residues include His138 and Lys546.

Belongs to the PEPCase type 1 family. In terms of assembly, homotetramer. It depends on Mg(2+) as a cofactor.

The catalysed reaction is oxaloacetate + phosphate = phosphoenolpyruvate + hydrogencarbonate. With respect to regulation, the enzyme has distinct binding sites for each of the allosteric effectors such as acetyl-CoA, fructose 1,6-bisphosphate, guanosine 3'-diphosphate 5'-diphosphate, long chain fatty acids, and L-aspartate. Functionally, forms oxaloacetate, a four-carbon dicarboxylic acid source for the tricarboxylic acid cycle. This chain is Phosphoenolpyruvate carboxylase (ppc), found in Salmonella typhi.